Here is a 426-residue protein sequence, read N- to C-terminus: D-tagatose-1,6-bisphosphate aldolase subunit KbaZ (426 aa).

The protein belongs to the GatZ/KbaZ family. KbaZ subfamily. In terms of assembly, forms a complex with KbaY.

The protein operates within carbohydrate metabolism; D-tagatose 6-phosphate degradation; D-glyceraldehyde 3-phosphate and glycerone phosphate from D-tagatose 6-phosphate: step 2/2. In terms of biological role, component of the tagatose-1,6-bisphosphate aldolase KbaYZ that is required for full activity and stability of the Y subunit. Could have a chaperone-like function for the proper and stable folding of KbaY. When expressed alone, KbaZ does not show any aldolase activity. This Escherichia coli O157:H7 protein is D-tagatose-1,6-bisphosphate aldolase subunit KbaZ.